Reading from the N-terminus, the 338-residue chain is m7GpppX diphosphatase (338 aa).

A disordered region spans residues 1 to 36 (MADTAPQLKRKREQEAEEAETPSTEEKEAGVGNGTS). A2 carries the N-acetylalanine modification. Residues 9–12 (KRKR) carry the nuclear localization signal (NLS) motif. S23 and S100 each carry phosphoserine. N6-acetyllysine occurs at positions 137 and 141. Residues 141-153 (KYMRQDLRLIRET) carry the nuclear export sequence (NES) motif. Residues W174, E184, D204, K206, and 267-278 (HYLPSYYHLHVH) contribute to the substrate site. The short motif at 274-278 (HLHVH) is the Histidine triad motif element. H276 functions as the Nucleophile in the catalytic mechanism.

The protein belongs to the HIT family. As to quaternary structure, homodimer. Associates with components of the exosome multienzyme ribonuclease complex, such as EXOSC3 and EXOSC4. Interacts with NDOR1.

The protein localises to the cytoplasm. It localises to the nucleus. It catalyses the reaction a 5'-end (N(7)-methyl 5'-triphosphoguanosine)-ribonucleoside in mRNA + H2O = N(7)-methyl-GMP + a 5'-end diphospho-ribonucleoside in mRNA + 2 H(+). The hydrolytic product 7-methylguanosine diphosphate (m7GDP) efficiently inhibits the decapping scavenger activity and acts as a competitive inhibitor in vitro. Inhibited by 2,4-diaminoquinazoline. Decapping scavenger enzyme that catalyzes the cleavage of a residual cap structure following the degradation of mRNAs by the 3'-&gt;5' exosome-mediated mRNA decay pathway. Hydrolyzes cap analog structures like 7-methylguanosine nucleoside triphosphate (m7GpppG) with up to 10 nucleotide substrates (small capped oligoribonucleotides) and specifically releases 5'-phosphorylated RNA fragments and 7-methylguanosine monophosphate (m7GMP). Cleaves cap analog structures like tri-methyl guanosine nucleoside triphosphate (m3(2,2,7)GpppG) with very poor efficiency. Does not hydrolyze unmethylated cap analog (GpppG) and shows no decapping activity on intact m7GpppG-capped mRNA molecules longer than 25 nucleotides. Does not hydrolyze 7-methylguanosine diphosphate (m7GDP) to m7GMP. May also play a role in the 5'-&gt;3 mRNA decay pathway; m7GDP, the downstream product released by the 5'-&gt;3' mRNA mediated decapping activity, may be also converted by DCPS to m7GMP. Binds to m7GpppG and strongly to m7GDP. Plays a role in first intron splicing of pre-mRNAs. Inhibits activation-induced cell death. This chain is m7GpppX diphosphatase (Dcps), found in Mus musculus (Mouse).